Reading from the N-terminus, the 1154-residue chain is Paired amphipathic helix protein pst3 (1154 aa).

2 disordered regions span residues M1–T71 and S91–N110. Over residues D9 to H27 the composition is skewed to basic and acidic residues. Polar residues-rich tracts occupy residues S32–H45 and Q100–N110. A PAH 1 domain is found at R111–G181. Disordered stretches follow at residues G199–N249 and D321–R376. Residues S228–P241 are compositionally biased toward low complexity. One can recognise a PAH 2 domain in the interval P252–N322. Polar residues-rich tracts occupy residues V323–P337 and A365–R376. Residues S403 to S472 enclose the PAH 3 domain. The tract at residues N797–D824 is disordered.

The protein resides in the nucleus. The sequence is that of Paired amphipathic helix protein pst3 (pst3) from Schizosaccharomyces pombe (strain 972 / ATCC 24843) (Fission yeast).